The primary structure comprises 238 residues: 2-C-methyl-D-erythritol 4-phosphate cytidylyltransferase (238 aa).

This sequence belongs to the IspD/TarI cytidylyltransferase family. IspD subfamily.

The enzyme catalyses 2-C-methyl-D-erythritol 4-phosphate + CTP + H(+) = 4-CDP-2-C-methyl-D-erythritol + diphosphate. It participates in isoprenoid biosynthesis; isopentenyl diphosphate biosynthesis via DXP pathway; isopentenyl diphosphate from 1-deoxy-D-xylulose 5-phosphate: step 2/6. Catalyzes the formation of 4-diphosphocytidyl-2-C-methyl-D-erythritol from CTP and 2-C-methyl-D-erythritol 4-phosphate (MEP). The polypeptide is 2-C-methyl-D-erythritol 4-phosphate cytidylyltransferase (Acinetobacter baumannii (strain SDF)).